Here is a 105-residue protein sequence, read N- to C-terminus: D-galactoside-specific lectin (105 aa).

An SUEL-type lectin domain is found at 13–103 (VCEDSSLTIS…KYLAVTYICS (91 aa)).

Homodimer; disulfide-linked.

It is found in the cytoplasm. Its function is as follows. This protein binds D-galactoside. May have an important role in the activation of eggs (triggered by fertilization), or in their subsequent differentiation. The dimeric form is essential for hemagglutination activity. The sequence is that of D-galactoside-specific lectin from Heliocidaris crassispina (Sea urchin).